The sequence spans 345 residues: Inositol 2-dehydrogenase (345 aa).

It belongs to the Gfo/Idh/MocA family. Homotetramer.

It catalyses the reaction myo-inositol + NAD(+) = scyllo-inosose + NADH + H(+). Involved in the oxidation of myo-inositol (MI) to 2-keto-myo-inositol (2KMI or 2-inosose). This Mycolicibacterium smegmatis (strain ATCC 700084 / mc(2)155) (Mycobacterium smegmatis) protein is Inositol 2-dehydrogenase.